A 333-amino-acid chain; its full sequence is Ribosome biogenesis regulatory protein homolog (333 aa).

2 disordered regions span residues 227 to 248 (KANV…VSGE) and 271 to 333 (AAAV…ARKG). Basic and acidic residues predominate over residues 278–295 (LREKKEKSERKGAKDQTR). The segment covering 324–333 (GANKAKARKG) has biased composition (basic residues).

It belongs to the RRS1 family.

The protein localises to the nucleus. It localises to the nucleolus. In terms of biological role, involved in ribosomal large subunit assembly. This is Ribosome biogenesis regulatory protein homolog from Caenorhabditis elegans.